Consider the following 154-residue polypeptide: Spermatogenesis-associated protein 19, mitochondrial (154 aa).

Residues 1–24 constitute a mitochondrion transit peptide; sequence MIITTWIMYIFARKTVGLPFPPRV. A phosphoserine mark is found at serine 26 and serine 116.

As to expression, expressed specifically in adult testis (at protein level).

The protein resides in the mitochondrion outer membrane. The protein localises to the mitochondrion. It localises to the cell projection. It is found in the cilium. Its subcellular location is the flagellum. Essential for sperm motility and male fertility. Plays an important role in sperm motility by regulating the organization and function of the mitochondria and is also required for correct sperm midpiece assembly. This Mus musculus (Mouse) protein is Spermatogenesis-associated protein 19, mitochondrial (Spata19).